A 1679-amino-acid chain; its full sequence is AF4/FMR2 family member lilli (1679 aa).

Disordered regions lie at residues 1–21 (MAQQQQQQLQQQQQHHTSSIN), 55–78 (NYNMEEYERRKRREREKIERQQGI), 124–305 (RSAP…EKDV), 406–539 (LHQL…GAQN), 580–609 (MGAGSGSGGTLSSGGSSSNKTPSPTESNKW), 733–755 (DSGTSASGSSSSSSSSSDSAVGG), 783–1172 (QPTQ…TTPH), and 1197–1319 (TPAQ…LQIG). The segment covering 69–78 (REKIERQQGI) has biased composition (basic and acidic residues). Low complexity-rich tracts occupy residues 144-181 (SLGHSPSSASASAAAGPTSASATTALPGQQQQHYQQQQ) and 212-244 (PSSSGMAPPRGPPRSSSSNSNSSSATNNASSGG). T421 is subject to Phosphothreonine. Basic and acidic residues predominate over residues 429-442 (LKTEKNHSLEKQDS). The span at 444 to 455 (LENDLELSESED) shows a compositional bias: acidic residues. A phosphoserine mark is found at S451 and S453. Over residues 464–484 (SAGNSSNSSESDSSESGSESS) the composition is skewed to low complexity. The span at 492–501 (HPNHQQHHHQ) shows a compositional bias: basic residues. Low complexity predominate over residues 502 to 532 (LQQQQQQQQQQASMQQQQVLQQQQQHRPQPL). Residues 582–591 (AGSGSGGTLS) are compositionally biased toward gly residues. Over residues 598–609 (NKTPSPTESNKW) the composition is skewed to polar residues. A compositionally biased stretch (low complexity) spans 733–752 (DSGTSASGSSSSSSSSSDSA). Residues 783 to 796 (QPTQSQKAPPSNSV) show a composition bias toward polar residues. The segment covering 810–820 (QRQKKPRKKKA) has biased composition (basic residues). S829 and S830 each carry phosphoserine. The segment at residues 859–871 (KKGRGRPRKQQQS) is a DNA-binding region (a.T hook). The segment covering 868–906 (QQQSGGSGNLSSASAGSSSQTKGPTLTAAKKPLAKTPLA) has biased composition (low complexity). 2 positions are modified to phosphoserine: S879 and S881. Residues 917-927 (SQSSSNGNTPT) are compositionally biased toward polar residues. 2 stretches are compositionally biased toward low complexity: residues 957-973 (SSSAESSSKSSSSSSSS) and 1001-1012 (GSGSSSPSSSGS). Residues 1019–1030 (TRSQVGSGQALA) are compositionally biased toward polar residues. Over residues 1042-1068 (SQHSQHLSSSECSSSSGGCTAVCSSSS) the composition is skewed to low complexity. Positions 1073–1090 (EGRREKERERKPKSDKNK) are enriched in basic and acidic residues. The segment covering 1130–1140 (QPPPPQAPPAA) has biased composition (pro residues). Residues 1198–1213 (PAQQNGHLTPKDQATN) show a composition bias toward polar residues. 2 stretches are compositionally biased toward basic and acidic residues: residues 1234-1251 (EHPVKPEPELDAGYEAKF) and 1260-1288 (FQLKQERDRDRERERERERERDREREQPP). S1368 bears the Phosphoserine mark. A Phosphothreonine modification is found at T1370. A compositionally biased stretch (low complexity) spans 1569 to 1589 (GNTPSSISPSNSVGSQGSGSN). The tract at residues 1569–1594 (GNTPSSISPSNSVGSQGSGSNTPPGR) is disordered.

Belongs to the AF4 family.

Its subcellular location is the nucleus. Its function is as follows. Has a role in transcriptional regulation. Acts in parallel with the Ras/MAPK and the PI3K/PKB pathways in the control of cell identity and cellular growth. Essential for regulation of the cytoskeleton and cell growth but not for cell proliferation or growth rate. Required specifically for the microtubule-based basal transport of lipid droplets. Plays a partially redundant function downstream of Raf in cell fate specification in the developing eye. Pair-rule protein that regulates embryonic cellularization, gastrulation and segmentation. In Drosophila erecta (Fruit fly), this protein is AF4/FMR2 family member lilli.